Consider the following 387-residue polypeptide: Lymphocyte transmembrane adapter 1 (387 aa).

At 1 to 37 the chain is on the extracellular side; the sequence is MDVTTSAWSETTRRISEPSTLQGTLGSLDKAEDHSSS. The chain crosses the membrane as a helical; Signal-anchor for type III membrane protein span at residues 38-58; it reads IFSGFAALLAILLVVAVICVL. Over 59-387 the chain is Cytoplasmic; sequence WCCGKRKKRQ…VCAAEAGARG (329 aa). The segment at 114-136 is disordered; sequence VSTESLLSRNSDSPSSEHVPSRA. Residues 118-129 are compositionally biased toward low complexity; sequence SLLSRNSDSPSS. Y195 bears the Phosphotyrosine mark. The disordered stretch occupies residues 230–268; sequence SEEIDEGCGNASDCTSLGSPGTENSDPLSDGEGSSQTSN. Polar residues predominate over residues 241–268; the sequence is SDCTSLGSPGTENSDPLSDGEGSSQTSN. Y270 and Y296 each carry phosphotyrosine. The tract at residues 294–387 is disordered; that stretch reads RDYENVPPGP…VCAAEAGARG (94 aa). Residues 319 to 329 are compositionally biased toward basic and acidic residues; the sequence is DHVEGRTDGPE. Residues 360-369 show a composition bias toward acidic residues; the sequence is PWEDAEETSS. Y375 carries the phosphotyrosine modification.

As to quaternary structure, when phosphorylated, interacts with GRB2, PIK3R1 and GRAP2. Phosphorylated on tyrosines upon TCR or BCR activation; which leads to the recruitment of GRB2, PIK3R1 and GRAP2.

It is found in the cell membrane. Its function is as follows. Negatively regulates TCR (T-cell antigen receptor)-mediated signaling in T-cells and BCR (B-cell antigen receptor)-mediated signaling in B-cells. The sequence is that of Lymphocyte transmembrane adapter 1 (LAX1) from Bos taurus (Bovine).